A 789-amino-acid polypeptide reads, in one-letter code: MAADWEEIRRLAADFQRAQFAEAAHRLSERNCIEIVTKLIAEKQLEVVHTLDGKEYVTPAQISKEIWDELSVCGGRINIVDLQQIINVDLLHIENRANDIVKSDKAVQLVLGQLINESYLDQLAEEINDKLQETGQVTISELCKAYDLPGDFLTQALSKRLGRIIHGRLDQENRGVIFTEAFVSRHRARIRGLFSAITRPTPVSNLITRYGFQEHLLYSVLEELVNTSRLKGTVVGGKQDKAVFVPDIYARTQSNWVDSFFKQNGYLEFDALYRLGIPDPAGYIKKRYKSTKLLFLRAACVGQEIVDRVEASVDEVISSGSWIDVATLLPSSLSVEDIGILLQQVMRSLNKNSSGLVFSDTIVVSEKFISSCTDLFSDMMKQKAEKEMKNSPVHLITEEDLKQSYVLENSYTNKKDKKDERRKKATEGSGSVRGGGGGNAREIKIKKTKKKGRKDADSDEESQATGTGRNKQLEFHFMSQEEMQDVLKTHLQDCPEELITELAEHLMRPLTKSYQEVVRSVFTSSTSSSGASGRQTMKDLQEEFSNLYNNIRLFEKGTKYFTDETQTNLAKHLLKTVCTDITNLIFNFLASDSMMTTENYSTITSEVRTKILGKLPEDTRGPLTKLHTSLNGKSLEDFLSYLDAAADICDIMVKKGDKKKERQVLFQHRQALIEQLKVTEDPALVLHLTAVLLFQFSTHCMLHAPGRSVPQIINFLSGKIPEDQHSLLIKYQGLVVKQLISQSKKAEQEDDNKTEEEEGADTIRKELQEITTSVKDLVLRPRKSSVTEE.

A required for E3 UFM1-protein ligase activity region spans residues 2 to 212 (AADWEEIRRL…VSNLITRYGF (211 aa)). Disordered regions lie at residues 407–470 (LENS…TGRN) and 743–763 (SKKA…ADTI). Residues 444-453 (KIKKTKKKGR) are compositionally biased toward basic residues. Residues 748-760 (QEDDNKTEEEEGA) are compositionally biased toward acidic residues.

The protein belongs to the UFL1 family. In terms of assembly, catalytic component of the UFM1 ribosome E3 ligase (UREL) complex. Interacts with E2-like enzyme UFC1.

The protein resides in the endoplasmic reticulum membrane. It is found in the cytoplasm. Its subcellular location is the cytosol. The protein localises to the nucleus. It localises to the chromosome. In terms of biological role, E3 protein ligase that mediates ufmylation, the covalent attachment of the ubiquitin-like modifier UFM1 to lysine residues on target proteins, and which plays a key role in various processes, such as ribosome recycling, response to DNA damage, interferon response or reticulophagy (also called ER-phagy). As part of the UREL complex, plays a key role in ribosome recycling by catalyzing mono-ufmylation of RPL26/uL24 subunit of the 60S ribosome. Ufmylation of RPL26/uL24 occurs on free 60S ribosomes following ribosome dissociation: it weakens the junction between post-termination 60S subunits and SEC61 translocons, promoting release and recycling of the large ribosomal subunit from the endoplasmic reticulum membrane. Ufmylation of RPL26/uL24 and subsequent 60S ribosome recycling either take place after normal termination of translation or after ribosome stalling during cotranslational translocation at the endoplasmic reticulum. Involved in reticulophagy in response to endoplasmic reticulum stress by mediating ufmylation of proteins such as CYB5R3 and RPN1, thereby promoting lysosomal degradation of ufmylated proteins. Ufmylation in response to endoplasmic reticulum stress is essential for processes such as hematopoiesis, blood vessel morphogenesis or inflammatory response. The polypeptide is E3 UFM1-protein ligase 1 (Gallus gallus (Chicken)).